The sequence spans 148 residues: Ribonuclease H (148 aa).

The region spanning 1–142 is the RNase H type-1 domain; it reads MSDSVELYTD…ADQLANRGVD (142 aa). Positions 10, 48, 70, and 134 each coordinate Mg(2+). The segment at 129-148 is disordered; it reads GNERADQLANRGVDEVRAKR.

This sequence belongs to the RNase H family. Monomer. Requires Mg(2+) as cofactor.

The protein localises to the cytoplasm. The enzyme catalyses Endonucleolytic cleavage to 5'-phosphomonoester.. Functionally, endonuclease that specifically degrades the RNA of RNA-DNA hybrids. The chain is Ribonuclease H from Pseudomonas putida (strain W619).